The primary structure comprises 360 residues: Phospho-N-acetylmuramoyl-pentapeptide-transferase (360 aa).

10 consecutive transmembrane segments (helical) span residues 27 to 47, 73 to 93, 98 to 118, 134 to 154, 168 to 188, 199 to 219, 239 to 259, 263 to 283, 288 to 308, and 337 to 357; these read GAVM…IEWL, TMGG…WADL, VWAV…DDYL, LVAQ…LGQG, LTFN…VGAS, GLAI…AYLV, LAVF…FNAP, VFMG…VSVV, IVLA…IVQV, and TVVI…LSTL.

The protein belongs to the glycosyltransferase 4 family. MraY subfamily. Mg(2+) is required as a cofactor.

It localises to the cell inner membrane. It carries out the reaction UDP-N-acetyl-alpha-D-muramoyl-L-alanyl-gamma-D-glutamyl-meso-2,6-diaminopimeloyl-D-alanyl-D-alanine + di-trans,octa-cis-undecaprenyl phosphate = di-trans,octa-cis-undecaprenyl diphospho-N-acetyl-alpha-D-muramoyl-L-alanyl-D-glutamyl-meso-2,6-diaminopimeloyl-D-alanyl-D-alanine + UMP. It functions in the pathway cell wall biogenesis; peptidoglycan biosynthesis. Functionally, catalyzes the initial step of the lipid cycle reactions in the biosynthesis of the cell wall peptidoglycan: transfers peptidoglycan precursor phospho-MurNAc-pentapeptide from UDP-MurNAc-pentapeptide onto the lipid carrier undecaprenyl phosphate, yielding undecaprenyl-pyrophosphoryl-MurNAc-pentapeptide, known as lipid I. The sequence is that of Phospho-N-acetylmuramoyl-pentapeptide-transferase from Rhodospirillum rubrum (strain ATCC 11170 / ATH 1.1.1 / DSM 467 / LMG 4362 / NCIMB 8255 / S1).